We begin with the raw amino-acid sequence, 100 residues long: NADH-quinone oxidoreductase subunit K (100 aa).

3 helical membrane passes run 2–22 (ITLTHYLILSAILFSIALVGI), 29–49 (LMLFFATEIALNAVNIALAAF), and 63–83 (FFIIAIAASEVAVGLGLLIIW).

The protein belongs to the complex I subunit 4L family. NDH-1 is composed of 14 different subunits. Subunits NuoA, H, J, K, L, M, N constitute the membrane sector of the complex.

The protein localises to the cell inner membrane. The enzyme catalyses a quinone + NADH + 5 H(+)(in) = a quinol + NAD(+) + 4 H(+)(out). Functionally, NDH-1 shuttles electrons from NADH, via FMN and iron-sulfur (Fe-S) centers, to quinones in the respiratory chain. The immediate electron acceptor for the enzyme in this species is believed to be ubiquinone. Couples the redox reaction to proton translocation (for every two electrons transferred, four hydrogen ions are translocated across the cytoplasmic membrane), and thus conserves the redox energy in a proton gradient. This Nitratiruptor sp. (strain SB155-2) protein is NADH-quinone oxidoreductase subunit K.